A 161-amino-acid chain; its full sequence is ATP synthase subunit b 1 (161 aa).

A helical transmembrane segment spans residues glutamate 6–phenylalanine 26.

This sequence belongs to the ATPase B chain family. In terms of assembly, F-type ATPases have 2 components, F(1) - the catalytic core - and F(0) - the membrane proton channel. F(1) has five subunits: alpha(3), beta(3), gamma(1), delta(1), epsilon(1). F(0) has three main subunits: a(1), b(2) and c(10-14). The alpha and beta chains form an alternating ring which encloses part of the gamma chain. F(1) is attached to F(0) by a central stalk formed by the gamma and epsilon chains, while a peripheral stalk is formed by the delta and b chains.

The protein localises to the cell inner membrane. Functionally, f(1)F(0) ATP synthase produces ATP from ADP in the presence of a proton or sodium gradient. F-type ATPases consist of two structural domains, F(1) containing the extramembraneous catalytic core and F(0) containing the membrane proton channel, linked together by a central stalk and a peripheral stalk. During catalysis, ATP synthesis in the catalytic domain of F(1) is coupled via a rotary mechanism of the central stalk subunits to proton translocation. Its function is as follows. Component of the F(0) channel, it forms part of the peripheral stalk, linking F(1) to F(0). In Bradyrhizobium diazoefficiens (strain JCM 10833 / BCRC 13528 / IAM 13628 / NBRC 14792 / USDA 110), this protein is ATP synthase subunit b 1.